We begin with the raw amino-acid sequence, 266 residues long: GRIP and coiled-coil domain-containing protein C365.11 (266 aa).

Residues 1–13 (METTVSAKNSLEN) show a composition bias toward polar residues. Residues 1–88 (METTVSAKNS…LDEKVKELEN (88 aa)) form a disordered region. Ser10 carries the post-translational modification Phosphoserine. The span at 36 to 49 (ASKKKRKNRKKKKN) shows a compositional bias: basic residues. Residues 63–88 (EEQRSGSIDSKDKEKPLDEKVKELEN) show a composition bias toward basic and acidic residues. A coiled-coil region spans residues 73 to 188 (KDKEKPLDEK…ESVKSHESEL (116 aa)). Residues Ser202 and Ser204 each carry the phosphoserine modification. The region spanning 216 to 264 (ISKELINKEYARNVLLQFLENHEHRDKILPILSTALDLEEVHQHLILKN) is the GRIP domain.

It localises to the cytoplasm. The polypeptide is GRIP and coiled-coil domain-containing protein C365.11 (Schizosaccharomyces pombe (strain 972 / ATCC 24843) (Fission yeast)).